Here is a 75-residue protein sequence, read N- to C-terminus: DNA-directed RNA polymerase subunit omega (75 aa).

The protein belongs to the RNA polymerase subunit omega family. In terms of assembly, in cyanobacteria the RNAP catalytic core is composed of 2 alpha, 1 beta, 1 beta', 1 gamma and 1 omega subunit. When a sigma factor is associated with the core the holoenzyme is formed, which can initiate transcription.

It catalyses the reaction RNA(n) + a ribonucleoside 5'-triphosphate = RNA(n+1) + diphosphate. Functionally, promotes RNA polymerase assembly. Latches the N- and C-terminal regions of the beta' subunit thereby facilitating its interaction with the beta and alpha subunits. The sequence is that of DNA-directed RNA polymerase subunit omega from Parasynechococcus marenigrum (strain WH8102).